A 552-amino-acid chain; its full sequence is Chromosomal replication initiator protein DnaA (552 aa).

The segment at 1 to 90 is domain I, interacts with DnaA modulators; that stretch reads MWNETWNEIT…FTVAVTVDPT (90 aa). A domain II region spans residues 90 to 210; the sequence is TLDVIQDLPH…KPAHDPDRNG (121 aa). A disordered region spans residues 113-213; it reads EHPHYSPVSQ…HDPDRNGSLN (101 aa). Positions 155–170 are enriched in low complexity; the sequence is PQPSQSSQSAQQQPAQ. A domain III, AAA+ region region spans residues 211–427; it reads SLNPRYTFDT…GAFIRVSAYA (217 aa). ATP is bound by residues Gly255, Gly257, Lys258, and Thr259. Residues 428–552 are domain IV, binds dsDNA; sequence SLNEAPINMA…TQQIKSSDRA (125 aa).

The protein belongs to the DnaA family. Oligomerizes as a right-handed, spiral filament on DNA at oriC.

It localises to the cytoplasm. Plays an essential role in the initiation and regulation of chromosomal replication. ATP-DnaA binds to the origin of replication (oriC) to initiate formation of the DNA replication initiation complex once per cell cycle. Binds the DnaA box (a 9 base pair repeat at the origin) and separates the double-stranded (ds)DNA. Forms a right-handed helical filament on oriC DNA; dsDNA binds to the exterior of the filament while single-stranded (ss)DNA is stabiized in the filament's interior. The ATP-DnaA-oriC complex binds and stabilizes one strand of the AT-rich DNA unwinding element (DUE), permitting loading of DNA polymerase. After initiation quickly degrades to an ADP-DnaA complex that is not apt for DNA replication. Binds acidic phospholipids. This chain is Chromosomal replication initiator protein DnaA, found in Corynebacterium diphtheriae (strain ATCC 700971 / NCTC 13129 / Biotype gravis).